Here is a 218-residue protein sequence, read N- to C-terminus: MDETLRKRLESARLYLCTDARADRGDLAEFLDAALAGGVDIVQLRDKTLDARDELAALEVVREACDRHGALLAVNDRADIAHAVNADVLHLGQRDLPVRYARAILGDRPLIGRSTNAAELSAAADREEGVDYFCIGPVWATPTKPGRPAAGLDEVARVAALHPQRPWFAIGGINEDNLDQVLAAGARRAVVVRAITEAEDPRAAAAELKRRLVAAAAA.

4-amino-2-methyl-5-(diphosphooxymethyl)pyrimidine-binding positions include 43 to 47 and N75; that span reads QLRDK. Mg(2+) contacts are provided by D76 and D95. Residue S114 coordinates 4-amino-2-methyl-5-(diphosphooxymethyl)pyrimidine. 141–143 is a 2-[(2R,5Z)-2-carboxy-4-methylthiazol-5(2H)-ylidene]ethyl phosphate binding site; the sequence is TPT. A 4-amino-2-methyl-5-(diphosphooxymethyl)pyrimidine-binding site is contributed by K144. Residue G172 coordinates 2-[(2R,5Z)-2-carboxy-4-methylthiazol-5(2H)-ylidene]ethyl phosphate.

The protein belongs to the thiamine-phosphate synthase family. It depends on Mg(2+) as a cofactor.

It carries out the reaction 2-[(2R,5Z)-2-carboxy-4-methylthiazol-5(2H)-ylidene]ethyl phosphate + 4-amino-2-methyl-5-(diphosphooxymethyl)pyrimidine + 2 H(+) = thiamine phosphate + CO2 + diphosphate. The enzyme catalyses 2-(2-carboxy-4-methylthiazol-5-yl)ethyl phosphate + 4-amino-2-methyl-5-(diphosphooxymethyl)pyrimidine + 2 H(+) = thiamine phosphate + CO2 + diphosphate. The catalysed reaction is 4-methyl-5-(2-phosphooxyethyl)-thiazole + 4-amino-2-methyl-5-(diphosphooxymethyl)pyrimidine + H(+) = thiamine phosphate + diphosphate. It functions in the pathway cofactor biosynthesis; thiamine diphosphate biosynthesis; thiamine phosphate from 4-amino-2-methyl-5-diphosphomethylpyrimidine and 4-methyl-5-(2-phosphoethyl)-thiazole: step 1/1. Functionally, condenses 4-methyl-5-(beta-hydroxyethyl)thiazole monophosphate (THZ-P) and 2-methyl-4-amino-5-hydroxymethyl pyrimidine pyrophosphate (HMP-PP) to form thiamine monophosphate (TMP). The protein is Thiamine-phosphate synthase of Thermobifida fusca (strain YX).